Here is a 164-residue protein sequence, read N- to C-terminus: Transcriptional regulator MraZ (164 aa).

2 SpoVT-AbrB domains span residues 7-57 (THQN…TVGA) and 86-129 (AYPL…NPEA). The interval 133-164 (RRQAARSRARTLATSRRPASAPAAGNTAGAAE) is disordered. Residues 142–164 (RTLATSRRPASAPAAGNTAGAAE) are compositionally biased toward low complexity.

This sequence belongs to the MraZ family. In terms of assembly, forms oligomers.

It localises to the cytoplasm. Its subcellular location is the nucleoid. This chain is Transcriptional regulator MraZ, found in Gluconobacter oxydans (strain 621H) (Gluconobacter suboxydans).